The primary structure comprises 68 residues: Neuronal regeneration-related protein (68 aa).

The tract at residues 22-54 (EGRLPKGRLPVPKEVNRKKNDETNAASLTPLGS) is disordered. Positions 44–54 (TNAASLTPLGS) are enriched in polar residues. Position 59 is a phosphoserine (Ser-59).

In terms of assembly, interacts with the latency-associated peptides (LAP) of TGFB1 and TGFB2; the interaction results in a decrease in TGFB autoinduction. Interacts with FLNA. Post-translationally, phosphorylated on Ser-59. Phosphorylation decreases stability and activity. As to expression, expressed in lung (at protein level).

It is found in the cytoplasm. Its function is as follows. May have roles in neural function. Ectopic expression augments motility of gliomas. Also promotes axonal regeneration. May also have functions in cellular differentiation. Induces differentiation of fibroblast into myofibroblast and myofibroblast ameboid migration. Increases retinoic-acid regulation of lipid-droplet biogenesis. Down-regulates the expression of TGFB1 and TGFB2 but not of TGFB3. May play a role in the regulation of alveolar generation. In Homo sapiens (Human), this protein is Neuronal regeneration-related protein (NREP).